The following is an 898-amino-acid chain: Zinc finger protein 574 (898 aa).

C2H2-type zinc fingers lie at residues 16 to 38 (YVCSECNQLYGSLEEVLVHQNSH), 76 to 98 (YQCLECGQLLLSPSQLLEHQELH), and 126 to 148 (YECVDCKALFASQEMWLSHRQTH). Residue serine 164 is modified to Phosphoserine. A C2H2-type 4 zinc finger spans residues 213-235 (YKCSECSQLFQMPADFLEHQATH). Residues 243–305 (AEEPATQQET…PRRSSSGESG (63 aa)) form a disordered region. Over residues 273 to 290 (HSYELRNELRNGEAMGRD) the composition is skewed to basic and acidic residues. At serine 301 the chain carries Phosphoserine. 4 C2H2-type zinc fingers span residues 310-332 (LFCSACDQIFLSPHQLQQHLRSH), 337-359 (FKCPLCSRVFPSPSSLDQHLGDH), 365-387 (FLCVDCGLAFGTEALLLAHRRAH), and 393-414 (HSCPCGKTFVNLTKFLYHRRTH). The interval 417 to 460 (GGVPLPTTPVPPEEPAISFPEPAPAETGELEAPELPVSEESSAE) is disordered. C2H2-type zinc fingers lie at residues 467–490 (YRCLLCSREFSKALQLTRHQRFVH), 496–518 (HKCSICGKMFKKKSHVRNHLRTH), 524–546 (FPCPDCSKPFNSPANLARHRLTH), 552–574 (YRCGDCGKAFTQSSTLRQHRLVH), 580–602 (YRCQECGVRFHRPYRLLMHRYHH), and 608–631 (YKCRECPRSFLLRRLLEVHQLVVH). A C2H2-type 15; degenerate zinc finger spans residues 637–660 (HRCPSCGAAFPSSLRLREHRCAAA). A C2H2-type 16 zinc finger spans residues 668–690 (FECGTCGKKVGSAARLQAHEAAH). Residues 691 to 735 (AAAGPGEVLAKEPPAPRAARATRTPVAPSPTALGGTTSAAPAAPA) form a disordered region. Residues 707 to 734 (RAARATRTPVAPSPTALGGTTSAAPAAP) show a composition bias toward low complexity. A Phosphoserine modification is found at serine 719. Position 726 is a phosphothreonine (threonine 726). 4 C2H2-type zinc fingers span residues 740-762 (LECSECKKLFSTETSLQVHRRIH), 768-790 (YPCPDCGKAFRQSTHLKDHRRLH), 796-818 (FACEVCGKAFAISMRLAEHRRIH), and 824-846 (YSCPDCGKSYRSFSNLWKHRKTH). Arginine 834 is subject to Asymmetric dimethylarginine.

Belongs to the krueppel C2H2-type zinc-finger protein family.

The protein resides in the nucleus. In terms of biological role, may be involved in transcriptional regulation. The chain is Zinc finger protein 574 (Znf574) from Rattus norvegicus (Rat).